The chain runs to 329 residues: Ribosomal RNA small subunit methyltransferase H (329 aa).

Residues 39–41, Asp57, Phe84, Asp100, and Gln107 each bind S-adenosyl-L-methionine; that span reads GGY. The interval 285 to 305 is disordered; sequence GPDKDELAQNPRSRSALLRVG.

The protein belongs to the methyltransferase superfamily. RsmH family.

It is found in the cytoplasm. The enzyme catalyses cytidine(1402) in 16S rRNA + S-adenosyl-L-methionine = N(4)-methylcytidine(1402) in 16S rRNA + S-adenosyl-L-homocysteine + H(+). In terms of biological role, specifically methylates the N4 position of cytidine in position 1402 (C1402) of 16S rRNA. This chain is Ribosomal RNA small subunit methyltransferase H, found in Ruegeria sp. (strain TM1040) (Silicibacter sp.).